A 1072-amino-acid chain; its full sequence is 5'-3' exoribonuclease 2 (1072 aa).

Positions 118 to 144 (RRFRAAREAMEKEEDKQKFVELLKKQN) form a coiled coil. The CCHC-type zinc-finger motif lies at 269-286 (RLCKICGQKGHDAMNCKG). Residues 414–435 (KETEDRREAGFKRRKLADEARQ) show a composition bias toward basic and acidic residues. Disordered stretches follow at residues 414-459 (KETE…GFSF), 509-577 (QGTS…AEPT), 865-911 (ASRS…GGGG), and 943-1072 (GGGY…RGYR). Residues 518-543 (AESTETPAETAAAAPATEEQAAPPAA) show a composition bias toward low complexity. The segment covering 892–911 (GPGGGQQGGRGRGGYQGGGG) has biased composition (gly residues). Residues 955–967 (GPPPGWQPPPPPG) show a composition bias toward pro residues. Gly residues-rich tracts occupy residues 983 to 1000 (AYGG…GSSR), 1025 to 1036 (YGQGGSRGGYQG), and 1056 to 1072 (GYRG…RGYR).

The protein belongs to the 5'-3' exonuclease family. XRN2/RAT1 subfamily. Interacts with rai1; the interaction is direct, stabilizes exr-1 protein structure and may stimulate its exoribonuclease activity. The interaction also stimulates rai1 pyrophosphohydrolase activity, probably by recruiting it to mRNA substrates.

The protein resides in the nucleus. In terms of biological role, possesses 5'-&gt;3' exoribonuclease activity. Required for the processing of nuclear mRNA and rRNA precursors. May promote the termination of transcription by RNA polymerase II. Essential for vegetative cell growth and chromosome segregation. This chain is 5'-3' exoribonuclease 2 (exr-1), found in Neurospora crassa (strain ATCC 24698 / 74-OR23-1A / CBS 708.71 / DSM 1257 / FGSC 987).